We begin with the raw amino-acid sequence, 374 residues long: Tuliposide A-converting enzyme b1, amyloplastic (374 aa).

An amyloplast-targeting transit peptide spans 1–68; sequence MSVALFCGPP…TNSSLSPSPT (68 aa). Catalysis depends on serine 226, which acts as the Acyl-ester intermediate. Residues aspartate 316 and histidine 348 each act as charge relay system in the active site.

It belongs to the AB hydrolase superfamily. Homodimer. Highly expressed in pistil and bulb scales. Lower expression in stem, and barely detected in root, leaf, petal and stamen.

The protein localises to the plastid. It localises to the amyloplast. It carries out the reaction 6-tuliposide A = tulipalin A + D-glucose. Its function is as follows. Lactone-forming carboxylesterases, specifically catalyzing intramolecular transesterification, but not hydrolysis. Involved in the biosynthesis of tulipalins, defensive chemicals that show antimicrobial activities against a broad range of strains of bacteria and fungi. Substrates are 6-tuliposide A &gt; 6-tuliposide B. The sequence is that of Tuliposide A-converting enzyme b1, amyloplastic (TCEA-B1) from Tulipa gesneriana (Garden tulip).